Reading from the N-terminus, the 178-residue chain is Ribosome maturation factor RimM (178 aa).

The PRC barrel domain occupies 101 to 178; sequence DGEYYWYQLQ…EMQVDWDADF (78 aa).

Belongs to the RimM family. As to quaternary structure, binds ribosomal protein uS19.

The protein localises to the cytoplasm. Its function is as follows. An accessory protein needed during the final step in the assembly of 30S ribosomal subunit, possibly for assembly of the head region. Essential for efficient processing of 16S rRNA. May be needed both before and after RbfA during the maturation of 16S rRNA. It has affinity for free ribosomal 30S subunits but not for 70S ribosomes. This is Ribosome maturation factor RimM from Stutzerimonas stutzeri (strain A1501) (Pseudomonas stutzeri).